The chain runs to 382 residues: V-set and immunoglobulin domain-containing protein 1 (382 aa).

Residues 1 to 21 (MGLTFWKVFLILNCLAGQVNG) form the signal peptide. The Ig-like V-type domain maps to 22 to 133 (VQVTIPDSFV…FFGKNQGTIS (112 aa)). Over 22–234 (VQVTIPDSFV…DLTTPYPGIG (213 aa)) the chain is Extracellular. Asn-32 carries an N-linked (GlcNAc...) asparagine glycan. Disulfide bonds link Cys-43–Cys-116 and Cys-161–Cys-211. In terms of domain architecture, Ig-like C2-type spans 140-227 (PSKPFCSIQG…GNSSCEIDLT (88 aa)). Residues Asn-200 and Asn-219 are each glycosylated (N-linked (GlcNAc...) asparagine). A helical transmembrane segment spans residues 235–255 (IIVGAFVGTLIGVIIIISVVW). At 256–382 (FVRRKVKAKG…FCDEEKVIKP (127 aa)) the chain is on the cytoplasmic side. The disordered stretch occupies residues 266–382 (KERKRNSKTT…FCDEEKVIKP (117 aa)). Residues 273-285 (KTTTELEPMTKIN) are compositionally biased toward polar residues. Positions 286–298 (QRTEGETMPREDA) are enriched in basic and acidic residues. Positions 327–341 (EPEPALQPTVEPPSG) are enriched in pro residues.

The protein localises to the membrane. The sequence is that of V-set and immunoglobulin domain-containing protein 1 (VSIG1) from Bos taurus (Bovine).